Consider the following 547-residue polypeptide: Auxin transporter-like protein 3 (547 aa).

The Cytoplasmic portion of the chain corresponds to 1–74 (MASGSSGGGY…DAWFSCASNQ (74 aa)). A helical membrane pass occupies residues 75–92 (VAQVLLTLPYSFAQLGMA). The Extracellular segment spans residues 93 to 94 (SG). A helical membrane pass occupies residues 95–115 (LLFQLFYGLLGSWTAYLISIL). At 116 to 151 (YLEYRTRKERDKVDFRNHVIQWFEVLDGLLGRHWRN) the chain is on the cytoplasmic side. A helical membrane pass occupies residues 152–172 (VGLAFNCTFLLFGSVIQLIGC). Over 173–187 (ASNIYYINDHLDKRT) the chain is Extracellular. Residues 188 to 208 (WTYIFGACCATTVFIPSFHNY) traverse the membrane as a helical segment. Over 209 to 211 (RIW) the chain is Cytoplasmic. The helical transmembrane segment at 212-232 (SFLGLLMTTYTAWYIAVASLI) threads the bilayer. The Extracellular portion of the chain corresponds to 233–247 (HGQVEGVAHSGPTSI). A helical transmembrane segment spans residues 248-268 (VLYFTGATNILYTFGGHAVTV). Over 269–281 (EIMHAMWRPQKFK) the chain is Cytoplasmic. A helical membrane pass occupies residues 282–302 (AIYLLATVYVLTLTLPSASAA). Topologically, residues 303-329 (YWAFGDALLTHSNALALLPRTPWRDAA) are extracellular. The helical transmembrane segment at 330–350 (VVLMLIHQFITFGFACTPLYF) threads the bilayer. Residues 351–371 (VWEKLVGLHGCPSLCKRAAAR) lie on the Cytoplasmic side of the membrane. A helical membrane pass occupies residues 372–392 (LPVVLPIWFLAIIFPFFGPIN). A topological domain (extracellular) is located at residue serine 393. The helical transmembrane segment at 394-414 (AVGSLLVSFTVYIIPSLAYMV) threads the bilayer. At 415 to 440 (TFRSPQSRQNAVERPPRFAGGWTGAY) the chain is on the cytoplasmic side. Residues 441 to 461 (VINSFVVAWVLVVGFGFGGWA) traverse the membrane as a helical segment. Over 462–547 (SITNFVHQVD…HHHRHHRHGL (86 aa)) the chain is Extracellular. A glycan (N-linked (GlcNAc...) asparagine) is linked at asparagine 509.

It belongs to the amino acid/polyamine transporter 2 family. Amino acid/auxin permease (AAAP) (TC 2.A.18.1) subfamily.

It localises to the cell membrane. Its function is as follows. Carrier protein involved in proton-driven auxin influx. May mediate the formation of auxin gradient from developing leaves (site of auxin biosynthesis) to tips. This Oryza sativa subsp. japonica (Rice) protein is Auxin transporter-like protein 3.